The primary structure comprises 871 residues: Protein TIC 100 (871 aa).

The tract at residues 1–85 (MANEELTESQ…NANPETNIRR (85 aa)) is disordered. The segment covering 8-20 (ESQQQEDPSQQLP) has biased composition (polar residues). A compositionally biased stretch (low complexity) spans 30–46 (SDSNSDSDASSQSSGDD). MORN repeat units lie at residues 219–239 (YEGTVWDDLAQGKGVYIAENG), 243–257 (YEGEWLQNDMEGHGV), and 337–352 (YAGQWKHSRMHGCGVY). Asparagine 238 bears the Deamidated asparagine mark. A coiled-coil region spans residues 587–647 (MLDGLEKWTE…QEEEKKTEMG (61 aa)). Disordered stretches follow at residues 631 to 654 (EELKKKEQEEEKKTEMGLTEEDED) and 669 to 721 (KEKI…NSPF). Basic and acidic residues predominate over residues 632 to 645 (ELKKKEQEEEKKTE). Phosphothreonine is present on threonine 649. Positions 669 to 683 (KEKIQENKQEEKYKD) are enriched in basic and acidic residues. Residues 684–704 (DDDEDDDDGDDDDDDDDDDDL) show a composition bias toward acidic residues.

Part of the Tic complex. Component of the 1-MD complex, composed of TIC20-I, TIC214, TIC100 and TIC56. Interacts with the translocating preproteins. Hydrolysis of ATP is essential for the formation of this complex. The 1-MD complex interacts with TIC21. In terms of tissue distribution, preferentially expressed in ovules, and moderately expressed in leaves and siliques.

It is found in the plastid. The protein localises to the chloroplast inner membrane. Functionally, involved in protein precursor import into chloroplasts. May be part of an intermediate translocation complex acting as a protein-conducting channel at the inner envelope. Plays an important role during embryogenesis and chloroplast biogenesis. This Arabidopsis thaliana (Mouse-ear cress) protein is Protein TIC 100.